The primary structure comprises 371 residues: Glutamate 5-kinase (371 aa).

Lys-14 is an ATP binding site. The substrate site is built by Ser-52, Asp-139, and Asn-151. Residue 171 to 172 coordinates ATP; it reads SD. The PUA domain occupies 275–353; the sequence is EGRLHLDSGA…ADLAMELGPS (79 aa).

It belongs to the glutamate 5-kinase family.

The protein localises to the cytoplasm. The enzyme catalyses L-glutamate + ATP = L-glutamyl 5-phosphate + ADP. The protein operates within amino-acid biosynthesis; L-proline biosynthesis; L-glutamate 5-semialdehyde from L-glutamate: step 1/2. Its function is as follows. Catalyzes the transfer of a phosphate group to glutamate to form L-glutamate 5-phosphate. The polypeptide is Glutamate 5-kinase (Frankia casuarinae (strain DSM 45818 / CECT 9043 / HFP020203 / CcI3)).